A 352-amino-acid polypeptide reads, in one-letter code: N-acetyl-gamma-glutamyl-phosphate reductase (352 aa).

The active site involves C155.

This sequence belongs to the NAGSA dehydrogenase family. Type 1 subfamily.

It localises to the cytoplasm. It catalyses the reaction N-acetyl-L-glutamate 5-semialdehyde + phosphate + NADP(+) = N-acetyl-L-glutamyl 5-phosphate + NADPH + H(+). It functions in the pathway amino-acid biosynthesis; L-arginine biosynthesis; N(2)-acetyl-L-ornithine from L-glutamate: step 3/4. Its function is as follows. Catalyzes the NADPH-dependent reduction of N-acetyl-5-glutamyl phosphate to yield N-acetyl-L-glutamate 5-semialdehyde. The sequence is that of N-acetyl-gamma-glutamyl-phosphate reductase from Crocosphaera subtropica (strain ATCC 51142 / BH68) (Cyanothece sp. (strain ATCC 51142)).